Consider the following 166-residue polypeptide: Co-chaperone protein HscB homolog (166 aa).

Residues 3–75 (QYFTLFRIEP…IDRAAYLLKT (73 aa)) enclose the J domain.

The protein belongs to the HscB family. In terms of assembly, interacts with HscA and stimulates its ATPase activity.

In terms of biological role, co-chaperone involved in the maturation of iron-sulfur cluster-containing proteins. Seems to help targeting proteins to be folded toward HscA. The polypeptide is Co-chaperone protein HscB homolog (Neisseria meningitidis serogroup A / serotype 4A (strain DSM 15465 / Z2491)).